A 688-amino-acid polypeptide reads, in one-letter code: NADPH-dependent diflavin oxidoreductase 1 (688 aa).

Residues 26 to 76 (HLHRHADTSPTNQHNTSHKMTTTEPIHVTTGSGESRDHTEPRHVTPTSPNA) form a disordered region. Over residues 33-58 (TSPTNQHNTSHKMTTTEPIHVTTGSG) the composition is skewed to polar residues. The span at 59-68 (ESRDHTEPRH) shows a compositional bias: basic and acidic residues. The Flavodoxin-like domain maps to 82-227 (ITIAYATETG…MYNEWQARFC (146 aa)). Residues 88-93 (TETGNA), 136-139 (STTG), 174-183 (LGDSSYPRFN), and D209 contribute to the FMN site. Residues 277–543 (KDVLQGTVVG…KHSTPIPDLD (267 aa)) form the FAD-binding FR-type domain. FAD contacts are provided by residues R453, 483–486 (RLFS), and 515–518 (GVLT). NADP(+) is bound by residues T554, 607–608 (SR), and 613–617 (GGYVQ). W688 provides a ligand contact to FAD.

The protein belongs to the NADPH-dependent diflavin oxidoreductase NDOR1 family. It in the N-terminal section; belongs to the flavodoxin family. In the C-terminal section; belongs to the flavoprotein pyridine nucleotide cytochrome reductase family. In terms of assembly, interacts with DRE2; as part of the cytosolic iron-sulfur (Fe-S) protein assembly (CIA) machinery. The cofactor is FAD. FMN is required as a cofactor.

It is found in the cytoplasm. The protein resides in the mitochondrion. It catalyses the reaction 2 oxidized [2Fe-2S]-[protein] + NADPH = 2 reduced [2Fe-2S]-[protein] + NADP(+) + H(+). Functionally, NADPH-dependent reductase which is a central component of the cytosolic iron-sulfur (Fe-S) protein assembly (CIA) machinery. Transfers electrons from NADPH via its FAD and FMN prosthetic groups to the [2Fe-2S] cluster of DRE2, another key component of the CIA machinery. In turn, this reduced cluster provides electrons for assembly of cytosolic iron-sulfur cluster proteins. Positively controls H(2)O(2)-induced cell death. The protein is NADPH-dependent diflavin oxidoreductase 1 of Yarrowia lipolytica (strain CLIB 122 / E 150) (Yeast).